Consider the following 502-residue polypeptide: Lysine--tRNA ligase (502 aa).

Mg(2+) is bound by residues Glu-411 and Glu-418.

It belongs to the class-II aminoacyl-tRNA synthetase family. As to quaternary structure, homodimer. Mg(2+) is required as a cofactor.

The protein localises to the cytoplasm. It catalyses the reaction tRNA(Lys) + L-lysine + ATP = L-lysyl-tRNA(Lys) + AMP + diphosphate. The protein is Lysine--tRNA ligase of Chromohalobacter salexigens (strain ATCC BAA-138 / DSM 3043 / CIP 106854 / NCIMB 13768 / 1H11).